We begin with the raw amino-acid sequence, 334 residues long: ADP-L-glycero-D-manno-heptose-6-epimerase (334 aa).

Residues 11–12 (FI), 32–33 (DN), K39, K54, 77–81 (QGACS), and N94 contribute to the NADP(+) site. Y141 serves as the catalytic Proton acceptor. K145 provides a ligand contact to NADP(+). N171 provides a ligand contact to substrate. V172 and K180 together coordinate NADP(+). Catalysis depends on K180, which acts as the Proton acceptor. Substrate-binding positions include R182, H189, 203 to 206 (FGSN), R216, and Y295.

The protein belongs to the NAD(P)-dependent epimerase/dehydratase family. HldD subfamily. Homopentamer. NADP(+) serves as cofactor.

The enzyme catalyses ADP-D-glycero-beta-D-manno-heptose = ADP-L-glycero-beta-D-manno-heptose. It functions in the pathway nucleotide-sugar biosynthesis; ADP-L-glycero-beta-D-manno-heptose biosynthesis; ADP-L-glycero-beta-D-manno-heptose from D-glycero-beta-D-manno-heptose 7-phosphate: step 4/4. It participates in bacterial outer membrane biogenesis; LOS core biosynthesis. In terms of biological role, catalyzes the interconversion between ADP-D-glycero-beta-D-manno-heptose and ADP-L-glycero-beta-D-manno-heptose via an epimerization at carbon 6 of the heptose. The chain is ADP-L-glycero-D-manno-heptose-6-epimerase from Neisseria meningitidis serogroup B (strain ATCC BAA-335 / MC58).